Consider the following 258-residue polypeptide: Redox-sensing transcriptional repressor Rex (258 aa).

The segment at residues 26-65 (LYLRALTALSERSVPTVSSEELAAAAGVNSAKLRKDFSYL) is a DNA-binding region (H-T-H motif). An NAD(+)-binding site is contributed by 100–105 (GIGNLG). The segment at 219–258 (AGEEAAADGAAPPVAARKQQRSTGSADQGPDGDVPAVMPA) is disordered. Residues 225 to 234 (ADGAAPPVAA) are compositionally biased toward low complexity.

The protein belongs to the transcriptional regulatory Rex family. Homodimer.

Its subcellular location is the cytoplasm. Modulates transcription of respiratory genes in response to changes in cellular NADH/NAD(+) redox state. Binds to the DNA sequence motif 5'-TGTGAACGCGTTCACA-3' in the promoter of the cydABCD operon. May play a general role as a sensor of cellular redox balance. The protein is Redox-sensing transcriptional repressor Rex of Streptomyces coelicolor (strain ATCC BAA-471 / A3(2) / M145).